Consider the following 436-residue polypeptide: Glutamate-1-semialdehyde 2,1-aminomutase (436 aa).

N6-(pyridoxal phosphate)lysine is present on Lys-274.

This sequence belongs to the class-III pyridoxal-phosphate-dependent aminotransferase family. HemL subfamily. Homodimer. Requires pyridoxal 5'-phosphate as cofactor.

Its subcellular location is the cytoplasm. It carries out the reaction (S)-4-amino-5-oxopentanoate = 5-aminolevulinate. It participates in porphyrin-containing compound metabolism; protoporphyrin-IX biosynthesis; 5-aminolevulinate from L-glutamyl-tRNA(Glu): step 2/2. The protein is Glutamate-1-semialdehyde 2,1-aminomutase of Albidiferax ferrireducens (strain ATCC BAA-621 / DSM 15236 / T118) (Rhodoferax ferrireducens).